Here is a 576-residue protein sequence, read N- to C-terminus: Potassium-transporting ATPase potassium-binding subunit (576 aa).

12 consecutive transmembrane segments (helical) span residues isoleucine 3–isoleucine 23, leucine 68–phenylalanine 88, glycine 137–isoleucine 157, isoleucine 179–valine 199, phenylalanine 267–isoleucine 287, tryptophan 294–phenylalanine 314, phenylalanine 339–valine 359, leucine 369–glycine 389, glycine 391–glycine 411, valine 430–threonine 450, isoleucine 495–methionine 515, and leucine 537–proline 557.

The protein belongs to the KdpA family. In terms of assembly, the system is composed of three essential subunits: KdpA, KdpB and KdpC.

It is found in the cell inner membrane. Its function is as follows. Part of the high-affinity ATP-driven potassium transport (or Kdp) system, which catalyzes the hydrolysis of ATP coupled with the electrogenic transport of potassium into the cytoplasm. This subunit binds the periplasmic potassium ions and delivers the ions to the membrane domain of KdpB through an intramembrane tunnel. This Hydrogenobaculum sp. (strain Y04AAS1) protein is Potassium-transporting ATPase potassium-binding subunit.